Consider the following 165-residue polypeptide: Large ribosomal subunit protein uL10 (165 aa).

This sequence belongs to the universal ribosomal protein uL10 family. As to quaternary structure, part of the ribosomal stalk of the 50S ribosomal subunit. The N-terminus interacts with L11 and the large rRNA to form the base of the stalk. The C-terminus forms an elongated spine to which L12 dimers bind in a sequential fashion forming a multimeric L10(L12)X complex.

Its function is as follows. Forms part of the ribosomal stalk, playing a central role in the interaction of the ribosome with GTP-bound translation factors. The polypeptide is Large ribosomal subunit protein uL10 (Shewanella halifaxensis (strain HAW-EB4)).